A 355-amino-acid polypeptide reads, in one-letter code: METPNTTEDYDTTTEFDYGDATPCQKVNERAFGAQLLPPLYSLVFVIGLVGNILVVLVLVQYKRLKNMTSIYLLNLAISDLLFLFTLPFWIDYKLKDDWVFGDAMCKILSGFYYTGLYSEIFFIILLTIDRYLAIVHAVFALRARTVTFGVITSIIIWALAILASMPGLYFSKTQWEFTHHTCSLHFPHESLREWKLFQALKLNLFGLVLPLLVMIICYTGIIKILLRRPNEKKSKAVRLIFVIMIIFFLFWTPYNLTILISVFQDFLFTHECEQSRHLDLAVQVTEVIAYTHCCVNPVIYAFVGERFRKYLRQLFHRRVAVHLVKWLPFLSVDRLERVSSTSPSTGEHELSAGF.

The Extracellular segment spans residues 1–34; the sequence is METPNTTEDYDTTTEFDYGDATPCQKVNERAFGA. The N-linked (GlcNAc...) asparagine glycan is linked to Asn5. 2 cysteine pairs are disulfide-bonded: Cys24-Cys273 and Cys106-Cys183. A helical membrane pass occupies residues 35–60; the sequence is QLLPPLYSLVFVIGLVGNILVVLVLV. At 61 to 64 the chain is on the cytoplasmic side; the sequence is QYKR. A helical membrane pass occupies residues 65–91; that stretch reads LKNMTSIYLLNLAISDLLFLFTLPFWI. Topologically, residues 92–107 are extracellular; that stretch reads DYKLKDDWVFGDAMCK. The helical transmembrane segment at 108 to 129 threads the bilayer; the sequence is ILSGFYYTGLYSEIFFIILLTI. At 130–146 the chain is on the cytoplasmic side; it reads DRYLAIVHAVFALRART. A helical transmembrane segment spans residues 147–171; the sequence is VTFGVITSIIIWALAILASMPGLYF. Residues 172–197 are Extracellular-facing; sequence SKTQWEFTHHTCSLHFPHESLREWKL. A helical membrane pass occupies residues 198-223; it reads FQALKLNLFGLVLPLLVMIICYTGII. The Cytoplasmic segment spans residues 224–239; the sequence is KILLRRPNEKKSKAVR. A helical transmembrane segment spans residues 240 to 264; sequence LIFVIMIIFFLFWTPYNLTILISVF. The Extracellular segment spans residues 265 to 281; it reads QDFLFTHECEQSRHLDL. Residues 282–305 form a helical membrane-spanning segment; it reads AVQVTEVIAYTHCCVNPVIYAFVG. The Cytoplasmic portion of the chain corresponds to 306–355; sequence ERFRKYLRQLFHRRVAVHLVKWLPFLSVDRLERVSSTSPSTGEHELSAGF.

It belongs to the G-protein coupled receptor 1 family. In terms of assembly, interacts with CREB3. Interacts with CCL3. Interacts with CCL15. Interacts with CCL23. Interacts with GNAI1. Interacts with PF4/CXCL4. Widely expressed in different hematopoietic cells.

It is found in the cell membrane. Its function is as follows. Chemokine receptor that plays a crucial role in regulating immune cell migration, inflammation, and immune responses. Contributes to the inflammatory response by recruiting immune cells, such as monocytes, macrophages, T-cells, and dendritic cells, to sites of inflammation for the clearance of pathogens and the resolution of tissue damage. When activated by its ligands including CCL3, CCL5-9, CCL13-16 and CCL23, triggers a signaling cascade within immune cells, leading to their migration towards the source of the chemokine. For example, mediates neutrophil migration after activation by CCL3 leading to the sequential release of TNF-alpha and leukotriene B4. Also mediates monocyte migration upon CXCL4 binding. Activation by CCL5 results in neuroinflammation through the ERK1/2 signaling pathway. The sequence is that of C-C chemokine receptor type 1 (CCR1) from Homo sapiens (Human).